Here is a 156-residue protein sequence, read N- to C-terminus: Putative F-box protein R637 (156 aa).

One can recognise an F-box domain in the interval 4–51; it reads HISSLLNEDCVRHIMCFLTDKEKGKFCLTCRDLLYLIKDVKFNDPVNK.

In Acanthamoeba polyphaga mimivirus (APMV), this protein is Putative F-box protein R637.